The sequence spans 471 residues: Pneumolysin (471 aa).

4 beta stranded membrane passes run 158–171 (MEQL…DFEK), 178–187 (IDFNSVHSGE), 256–265 (SDEVEAAFEA), and 273–285 (APQT…LDNT). The short motif at 427–437 (ECTGLAWEWWR) is the Conserved undecapeptide element. The Cholesterol binding signature appears at 459-460 (TL).

This sequence belongs to the cholesterol-dependent cytolysin family. In terms of assembly, homooligomeric pore complex of 35 to 50 subunits; when inserted in the host membrane. Has a slightly altered apparent molecular weight in a secA2 deletion mutant, but no post-translational modifications have been found.

It is found in the secreted. The protein resides in the cell wall. The protein localises to the host cell membrane. A cholesterol-dependent toxin that causes cytolysis by forming pores in cholesterol containing host membranes. After binding to target membranes, the protein undergoes a major conformation change, leading to its insertion in the host membrane and formation of an oligomeric pore complex. Cholesterol is required for binding to host membranes, membrane insertion and pore formation; cholesterol binding is mediated by a Thr-Leu pair in the C-terminus. Can be reversibly inactivated by oxidation. In Streptococcus pneumoniae serotype 4 (strain ATCC BAA-334 / TIGR4), this protein is Pneumolysin (ply).